Here is a 151-residue protein sequence, read N- to C-terminus: Transcriptional repressor NrdR (151 aa).

Residues 3 to 34 fold into a zinc finger; it reads CPYCGSLDNKVIDSRLSRDDTETRRRRECLEC. An ATP-cone domain is found at 49–139; that stretch reads LMIVKKDGRR…VYREFKDVHD (91 aa).

The protein belongs to the NrdR family. The cofactor is Zn(2+).

Its function is as follows. Negatively regulates transcription of bacterial ribonucleotide reductase nrd genes and operons by binding to NrdR-boxes. This is Transcriptional repressor NrdR from Desulfosudis oleivorans (strain DSM 6200 / JCM 39069 / Hxd3) (Desulfococcus oleovorans).